Reading from the N-terminus, the 348-residue chain is UPF0283 membrane protein PMI1371 (348 aa).

2 consecutive transmembrane segments (helical) span residues 69–89 and 99–119; these read LITVASTILGVSVIAQAGQWI and IALGAASAGGLIVIAGMGSVI.

This sequence belongs to the UPF0283 family.

It is found in the cell inner membrane. In Proteus mirabilis (strain HI4320), this protein is UPF0283 membrane protein PMI1371.